The sequence spans 163 residues: Glutathione peroxidase 1 (163 aa).

Cys36 is a catalytic residue.

Belongs to the glutathione peroxidase family.

The protein localises to the cytoplasm. It catalyses the reaction 2 glutathione + H2O2 = glutathione disulfide + 2 H2O. Functionally, may constitute a glutathione peroxidase-like protective system against oxidative stresses. This is Glutathione peroxidase 1 (gpx-1) from Caenorhabditis elegans.